A 127-amino-acid chain; its full sequence is Aspartate 1-decarboxylase (127 aa).

The active-site Schiff-base intermediate with substrate; via pyruvic acid is the Ser25. Ser25 is modified (pyruvic acid (Ser)). Residue Thr57 participates in substrate binding. Tyr58 functions as the Proton donor in the catalytic mechanism. A substrate-binding site is contributed by 73–75 (GSA).

It belongs to the PanD family. In terms of assembly, heterooctamer of four alpha and four beta subunits. The cofactor is pyruvate. Is synthesized initially as an inactive proenzyme, which is activated by self-cleavage at a specific serine bond to produce a beta-subunit with a hydroxyl group at its C-terminus and an alpha-subunit with a pyruvoyl group at its N-terminus.

It localises to the cytoplasm. It carries out the reaction L-aspartate + H(+) = beta-alanine + CO2. The protein operates within cofactor biosynthesis; (R)-pantothenate biosynthesis; beta-alanine from L-aspartate: step 1/1. Catalyzes the pyruvoyl-dependent decarboxylation of aspartate to produce beta-alanine. In Laribacter hongkongensis (strain HLHK9), this protein is Aspartate 1-decarboxylase.